A 360-amino-acid polypeptide reads, in one-letter code: D-alanine--D-alanine ligase (360 aa).

In terms of domain architecture, ATP-grasp spans 149-353 (KKLMAAEGLP…YEELLDVLVQ (205 aa)). 176 to 231 (KNLLGLPVFVKPARGGSSIGISRVTAWEDFNKAVGLARAHDEKVIVESEIVGSEVE) contributes to the ATP binding site. Aspartate 308, glutamate 320, and asparagine 322 together coordinate Mg(2+).

It belongs to the D-alanine--D-alanine ligase family. Requires Mg(2+) as cofactor. Mn(2+) serves as cofactor.

It is found in the cytoplasm. It carries out the reaction 2 D-alanine + ATP = D-alanyl-D-alanine + ADP + phosphate + H(+). It participates in cell wall biogenesis; peptidoglycan biosynthesis. Functionally, cell wall formation. The sequence is that of D-alanine--D-alanine ligase from Corynebacterium glutamicum (strain ATCC 13032 / DSM 20300 / JCM 1318 / BCRC 11384 / CCUG 27702 / LMG 3730 / NBRC 12168 / NCIMB 10025 / NRRL B-2784 / 534).